The following is a 405-amino-acid chain: Phosphatidylinositol 5-phosphate 4-kinase type-2 alpha (405 aa).

The residue at position 2 (Ala-2) is an N-acetylalanine. Thr-3 is modified (phosphothreonine). Phosphoserine is present on Ser-14. The region spanning Ala-33–Leu-405 is the PIPK domain. The interval Val-59–Asp-65 is required for interaction with PIP5K1A. 2 positions are modified to N6-acetyllysine: Lys-89 and Lys-145. Residues Gln-288–Ala-328 are disordered. Residues Glu-289 to Ser-304 show a composition bias toward acidic residues.

Homodimer. Interacts with PIP4K2B; the interaction may regulate localization to the nucleus. Probably interacts with PIP5K1A; the interaction inhibits PIP5K1A kinase activity. Post-translationally, phosphorylated in tyrosines. Phosphorylation is induced by light and increases kinase activity. In terms of tissue distribution, detected in rod photoreceptor cells.

Its subcellular location is the cell membrane. It localises to the nucleus. The protein localises to the lysosome. The protein resides in the cytoplasm. It is found in the photoreceptor inner segment. Its subcellular location is the cell projection. It localises to the cilium. The protein localises to the photoreceptor outer segment. The enzyme catalyses a 1,2-diacyl-sn-glycero-3-phospho-(1D-myo-inositol-5-phosphate) + ATP = a 1,2-diacyl-sn-glycero-3-phospho-(1D-myo-inositol-4,5-bisphosphate) + ADP + H(+). It carries out the reaction 1,2-dihexadecanoyl-sn-glycero-3-phospho-(1D-myo-inositol-5-phosphate) + ATP = 1,2-dihexadecanoyl-sn-glycero-3-phospho-(1D-myo-inositol-4,5-bisphosphate) + ADP + H(+). The catalysed reaction is 1,2-dihexadecanoyl-sn-glycero-3-phospho-(1D-myo-inositol-5-phosphate) + GTP = 1,2-dihexadecanoyl-sn-glycero-3-phospho-(1D-myo-inositol-4,5-bisphosphate) + GDP + H(+). Its activity is regulated as follows. In rod outer segments, activated by light. In terms of biological role, catalyzes the phosphorylation of phosphatidylinositol 5-phosphate (PtdIns5P) on the fourth hydroxyl of the myo-inositol ring, to form phosphatidylinositol 4,5-bisphosphate (PtdIns(4,5)P2). Has both ATP- and GTP-dependent kinase activities. May exert its function by regulating the levels of PtdIns5P, which functions in the cytosol by increasing AKT activity and in the nucleus signals through ING2. May regulate the pool of cytosolic PtdIns5P in response to the activation of tyrosine phosphorylation. Required for lysosome-peroxisome membrane contacts and intracellular cholesterol transport through modulating peroxisomal PtdIns(4,5)P2 level. In collaboration with PIP4K2B, has a role in mediating autophagy in times of nutrient stress. Required for autophagosome-lysosome fusion and the regulation of cellular lipid metabolism. Negatively regulates insulin signaling through a catalytic-independent mechanism. PIP4Ks interact with PIP5Ks and suppress PIP5K-mediated PtdIns(4,5)P2 synthesis and insulin-dependent conversion to PtdIns(3,4,5)P3. May be involved in thrombopoiesis, and the terminal maturation of megakaryocytes and regulation of their size. The protein is Phosphatidylinositol 5-phosphate 4-kinase type-2 alpha of Mus musculus (Mouse).